Reading from the N-terminus, the 411-residue chain is Inhibin beta B chain (411 aa).

A signal peptide spans 1 to 28 (MDGLPGRALGAACLLLLAAGWLGPEAWG). The interval 27–69 (WGSPTPPPSPAAPPPPPPPGAPGGSQDTCTSCGGGGGGFRRPE) is disordered. Residues 29-296 (SPTPPPSPAA…GDSRHRIRKR (268 aa)) constitute a propeptide that is removed on maturation. Residues 30-47 (PTPPPSPAAPPPPPPPGA) are compositionally biased toward pro residues. Asn97 is a glycosylation site (N-linked (GlcNAc...) asparagine). Disulfide bonds link Cys300–Cys308, Cys307–Cys376, Cys336–Cys408, and Cys340–Cys410.

It belongs to the TGF-beta family. In terms of assembly, dimeric, linked by one or more disulfide bonds. Inhibin B is a dimer of alpha and beta-B. Activin B is a homodimer of beta-B. Activin AB is a dimer of beta-A and beta-B. Interacts with FST and FSTL3. In terms of tissue distribution, alpha- and beta-B subunits are the predominant forms found in rat testis. Also expressed in ovary.

The protein localises to the secreted. In terms of biological role, inhibins and activins inhibit and activate, respectively, the secretion of follitropin by the pituitary gland. Inhibins/activins are involved in regulating a number of diverse functions such as hypothalamic and pituitary hormone secretion, gonadal hormone secretion, germ cell development and maturation, erythroid differentiation, insulin secretion, nerve cell survival, embryonic axial development or bone growth, depending on their subunit composition. Inhibins appear to oppose the functions of activins. Activin B is a dimer of alpha and beta-B that plays a role in several essential biological processes including embryonic development, stem cell maintenance and differentiation, haematopoiesis, cell proliferation and wound healing. Signals through type I receptor ACVR1C, abundantly expressed in pancreatic beta cells, and type II receptors like ACVR2A. Upon ligand binding, these receptors phosphorylate intracellular signaling mediators SMAD2 and SMAD3, which form a complex with SMAD4, translocate to the nucleus, and regulate gene expression. Plays a crucial role in the induction of hepcidin by inflammation through activation of ACVR1C and subsequent phosphorylation of SMAD1/5/8. Regulates adipocyte lipid metabolism by decreasing non-esterified fatty acids and glycerol release and increases intracellular triglyceride content. Stimulates wound healing by promoting cell migration and hair follicle regeneration through the JNK and ERK signaling pathways downstream of RHOA. Its function is as follows. Inhibin B is a dimer of alpha and beta-B that plays a crucial role in the regulation of the reproductive system by inhibiting the secretion of follicle-stimulating hormone (FSH) from the anterior pituitary gland. Thereby, maintains reproductive homeostasis in both males and females. Acts as a more potent suppressor of FSH release than inhibin A. Functions as competitive receptor antagonist binding activin type II receptors with high affinity in the presence of the TGF-beta type III coreceptor/TGFBR3L. The chain is Inhibin beta B chain (Inhbb) from Rattus norvegicus (Rat).